Reading from the N-terminus, the 815-residue chain is Probable E3 ubiquitin-protein ligase hulA (815 aa).

The C2 domain occupies 1-112 (MGSNLPSQPN…EMGGDEMLTR (112 aa)). Disordered stretches follow at residues 134–237 (NLST…GWER) and 253–353 (RTTT…YFVD). Low complexity-rich tracts occupy residues 165-185 (ASAA…SNPS) and 202-212 (APGAAAGATPT). Composition is skewed to polar residues over residues 213–226 (NTQG…SFED) and 253–270 (RTTT…QTQR). In terms of domain architecture, WW 1 spans 229–262 (GRLPAGWERREDNLGRTYYVDHNTRTTTWTRPSS). The span at 279-294 (LERRAHQSRMLPEDRT) shows a compositional bias: basic and acidic residues. Residues 295-308 (GANSPNLPETSQQA) are compositionally biased toward polar residues. Residues 324-333 (ATGATTAGTG) show a composition bias toward low complexity. WW domains lie at 333–366 (GELP…DPRR) and 393–426 (GPLP…DPRL). The HECT domain maps to 482-815 (SASDLKKRLM…VEETLGFGQE (334 aa)). Catalysis depends on cysteine 783, which acts as the Glycyl thioester intermediate.

This sequence belongs to the RSP5/NEDD4 family. In terms of assembly, interacts with creD.

Its subcellular location is the cytoplasm. It carries out the reaction S-ubiquitinyl-[E2 ubiquitin-conjugating enzyme]-L-cysteine + [acceptor protein]-L-lysine = [E2 ubiquitin-conjugating enzyme]-L-cysteine + N(6)-ubiquitinyl-[acceptor protein]-L-lysine.. The protein operates within protein modification; protein ubiquitination. In terms of biological role, E3 ubiquitin-protein ligase which accepts ubiquitin from an E2 ubiquitin-conjugating enzyme in the form of a thioester and then directly transfers the ubiquitin to targeted substrates. Probably involved in the regulatory network controlling carbon source utilization. In Aspergillus clavatus (strain ATCC 1007 / CBS 513.65 / DSM 816 / NCTC 3887 / NRRL 1 / QM 1276 / 107), this protein is Probable E3 ubiquitin-protein ligase hulA (hulA).